Reading from the N-terminus, the 139-residue chain is Large ribosomal subunit protein uL16c (139 aa).

Basic residues predominate over residues 1–17; that stretch reads MLSPKKTKFRKQHRGRM. Residues 1 to 23 form a disordered region; that stretch reads MLSPKKTKFRKQHRGRMKGSASK.

This sequence belongs to the universal ribosomal protein uL16 family. In terms of assembly, part of the 50S ribosomal subunit.

The protein resides in the plastid. It localises to the chloroplast. The protein is Large ribosomal subunit protein uL16c of Pyropia yezoensis (Susabi-nori).